The primary structure comprises 480 residues: Adenosylhomocysteinase (480 aa).

3 residues coordinate substrate: Thr63, Asp142, and Glu203. 204 to 206 (TTT) contributes to the NAD(+) binding site. Substrate-binding residues include Lys233 and Asp237. NAD(+)-binding positions include Asn238, 267–272 (GYGDVG), Glu290, Asn325, 346–348 (IGH), and Asn394.

This sequence belongs to the adenosylhomocysteinase family. It depends on NAD(+) as a cofactor.

Its subcellular location is the cytoplasm. It carries out the reaction S-adenosyl-L-homocysteine + H2O = L-homocysteine + adenosine. The protein operates within amino-acid biosynthesis; L-homocysteine biosynthesis; L-homocysteine from S-adenosyl-L-homocysteine: step 1/1. Functionally, may play a key role in the regulation of the intracellular concentration of adenosylhomocysteine. The sequence is that of Adenosylhomocysteinase from Xanthomonas axonopodis pv. citri (strain 306).